Here is a 218-residue protein sequence, read N- to C-terminus: Large ribosomal subunit protein uL3 (218 aa).

Belongs to the universal ribosomal protein uL3 family. As to quaternary structure, part of the 50S ribosomal subunit. Forms a cluster with proteins L14 and L19.

One of the primary rRNA binding proteins, it binds directly near the 3'-end of the 23S rRNA, where it nucleates assembly of the 50S subunit. This is Large ribosomal subunit protein uL3 from Corynebacterium urealyticum (strain ATCC 43042 / DSM 7109).